The chain runs to 124 residues: Galanin peptides (124 aa).

The N-terminal stretch at 1–19 (MARGSVILLAWLLLVATLS) is a signal peptide. The propeptide occupies 20–30 (ATLGLGMPTKE). Position 61 is a threonine amide (threonine 61). 2 positions are modified to phosphoserine: serine 117 and serine 118.

Belongs to the galanin family.

Its subcellular location is the secreted. Its function is as follows. Endocrine hormone of the central and peripheral nervous systems that binds and activates the G protein-coupled receptors GALR1, GALR2, and GALR3. This small neuropeptide may regulate diverse physiologic functions including contraction of smooth muscle of the gastrointestinal and genitourinary tract, growth hormone and insulin release and adrenal secretion. This chain is Galanin peptides (Gal), found in Rattus norvegicus (Rat).